The chain runs to 337 residues: 4-hydroxy-3-methylbut-2-enyl diphosphate reductase (337 aa).

A [4Fe-4S] cluster-binding site is contributed by Cys-38. Positions 67 and 100 each coordinate (2E)-4-hydroxy-3-methylbut-2-enyl diphosphate. Residues His-67 and His-100 each contribute to the dimethylallyl diphosphate site. The isopentenyl diphosphate site is built by His-67 and His-100. Position 122 (Cys-122) interacts with [4Fe-4S] cluster. (2E)-4-hydroxy-3-methylbut-2-enyl diphosphate is bound at residue His-150. His-150 contacts dimethylallyl diphosphate. His-150 serves as a coordination point for isopentenyl diphosphate. Glu-152 functions as the Proton donor in the catalytic mechanism. Thr-190 contributes to the (2E)-4-hydroxy-3-methylbut-2-enyl diphosphate binding site. Residue Cys-220 participates in [4Fe-4S] cluster binding. (2E)-4-hydroxy-3-methylbut-2-enyl diphosphate is bound by residues Ser-248, Ser-249, Asn-250, and Ser-293. Residues Ser-248, Ser-249, Asn-250, and Ser-293 each contribute to the dimethylallyl diphosphate site. The isopentenyl diphosphate site is built by Ser-248, Ser-249, Asn-250, and Ser-293.

This sequence belongs to the IspH family. [4Fe-4S] cluster serves as cofactor.

The enzyme catalyses isopentenyl diphosphate + 2 oxidized [2Fe-2S]-[ferredoxin] + H2O = (2E)-4-hydroxy-3-methylbut-2-enyl diphosphate + 2 reduced [2Fe-2S]-[ferredoxin] + 2 H(+). It catalyses the reaction dimethylallyl diphosphate + 2 oxidized [2Fe-2S]-[ferredoxin] + H2O = (2E)-4-hydroxy-3-methylbut-2-enyl diphosphate + 2 reduced [2Fe-2S]-[ferredoxin] + 2 H(+). The protein operates within isoprenoid biosynthesis; dimethylallyl diphosphate biosynthesis; dimethylallyl diphosphate from (2E)-4-hydroxy-3-methylbutenyl diphosphate: step 1/1. Its pathway is isoprenoid biosynthesis; isopentenyl diphosphate biosynthesis via DXP pathway; isopentenyl diphosphate from 1-deoxy-D-xylulose 5-phosphate: step 6/6. Functionally, catalyzes the conversion of 1-hydroxy-2-methyl-2-(E)-butenyl 4-diphosphate (HMBPP) into a mixture of isopentenyl diphosphate (IPP) and dimethylallyl diphosphate (DMAPP). Acts in the terminal step of the DOXP/MEP pathway for isoprenoid precursor biosynthesis. This is 4-hydroxy-3-methylbut-2-enyl diphosphate reductase from Mycolicibacterium vanbaalenii (strain DSM 7251 / JCM 13017 / BCRC 16820 / KCTC 9966 / NRRL B-24157 / PYR-1) (Mycobacterium vanbaalenii).